Consider the following 250-residue polypeptide: DNA repair protein RecO (250 aa).

It belongs to the RecO family.

In terms of biological role, involved in DNA repair and RecF pathway recombination. This Lactobacillus acidophilus (strain ATCC 700396 / NCK56 / N2 / NCFM) protein is DNA repair protein RecO.